An 895-amino-acid polypeptide reads, in one-letter code: Alanine--tRNA ligase (895 aa).

4 residues coordinate Zn(2+): histidine 577, histidine 581, cysteine 680, and histidine 684.

The protein belongs to the class-II aminoacyl-tRNA synthetase family. Zn(2+) serves as cofactor.

The protein resides in the cytoplasm. The catalysed reaction is tRNA(Ala) + L-alanine + ATP = L-alanyl-tRNA(Ala) + AMP + diphosphate. In terms of biological role, catalyzes the attachment of alanine to tRNA(Ala) in a two-step reaction: alanine is first activated by ATP to form Ala-AMP and then transferred to the acceptor end of tRNA(Ala). Also edits incorrectly charged Ser-tRNA(Ala) and Gly-tRNA(Ala) via its editing domain. The protein is Alanine--tRNA ligase of Kocuria rhizophila (strain ATCC 9341 / DSM 348 / NBRC 103217 / DC2201).